The sequence spans 344 residues: Heat-inducible transcription repressor HrcA (344 aa).

The protein belongs to the HrcA family.

Functionally, negative regulator of class I heat shock genes (grpE-dnaK-dnaJ and groELS operons). Prevents heat-shock induction of these operons. The sequence is that of Heat-inducible transcription repressor HrcA from Streptococcus equi subsp. zooepidemicus (strain H70).